The sequence spans 369 residues: N-succinylamino acid racemase (369 aa).

The active-site Proton donor is the K163. The Mg(2+) site is built by D188, E213, and D238. The active-site Proton acceptor is K262.

The protein belongs to the mandelate racemase/muconate lactonizing enzyme family. MenC type 2 subfamily. As to quaternary structure, homooctamer. Tetramer of dimers. A divalent metal cation is required as a cofactor.

The enzyme catalyses (1R,6R)-6-hydroxy-2-succinyl-cyclohexa-2,4-diene-1-carboxylate = 2-succinylbenzoate + H2O. In terms of biological role, acts as a N-succinylamino acid racemase (NSAR) that catalyzes the racemization of N-succinyl-L-phenylglycine. Also converts 2-succinyl-6-hydroxy-2,4-cyclohexadiene-1-carboxylate (SHCHC) to 2-succinylbenzoate (OSB). Catalyzes both N-succinylamino acid racemization and OSB synthesis at equivalent rates. However, NSAR activity is probably the protein's biological function, because menaquinone biosynthesis genes are missing in this species. The polypeptide is N-succinylamino acid racemase (Thermus thermophilus (strain ATCC 27634 / DSM 579 / HB8)).